The sequence spans 273 residues: F-actin-capping protein subunit alpha (273 aa).

The protein belongs to the F-actin-capping protein alpha subunit family. Heterodimer of an alpha and a beta subunit.

It localises to the cytoplasm. It is found in the cytoskeleton. In terms of biological role, F-actin-capping proteins bind in a Ca(2+)-independent manner to the fast growing ends of actin filaments (barbed end) thereby blocking the exchange of subunits at these ends. Unlike other capping proteins (such as gelsolin and severin), these proteins do not sever actin filaments. The chain is F-actin-capping protein subunit alpha (cap1) from Emericella nidulans (strain FGSC A4 / ATCC 38163 / CBS 112.46 / NRRL 194 / M139) (Aspergillus nidulans).